A 405-amino-acid chain; its full sequence is Acetylornithine aminotransferase 2 (405 aa).

Residues 105–106 (GT) and Phe138 each bind pyridoxal 5'-phosphate. Arg141 is a N(2)-acetyl-L-ornithine binding site. Pyridoxal 5'-phosphate is bound at residue 224–227 (DEVQ). At Lys254 the chain carries N6-(pyridoxal phosphate)lysine. Residue Ser282 coordinates N(2)-acetyl-L-ornithine. Residue Thr283 participates in pyridoxal 5'-phosphate binding.

Belongs to the class-III pyridoxal-phosphate-dependent aminotransferase family. ArgD subfamily. Homodimer. Pyridoxal 5'-phosphate serves as cofactor.

The protein localises to the cytoplasm. The catalysed reaction is N(2)-acetyl-L-ornithine + 2-oxoglutarate = N-acetyl-L-glutamate 5-semialdehyde + L-glutamate. It participates in amino-acid biosynthesis; L-arginine biosynthesis; N(2)-acetyl-L-ornithine from L-glutamate: step 4/4. In Caulobacter vibrioides (strain ATCC 19089 / CIP 103742 / CB 15) (Caulobacter crescentus), this protein is Acetylornithine aminotransferase 2.